Here is a 545-residue protein sequence, read N- to C-terminus: Metal transporter NRAT1 (545 aa).

Helical transmembrane passes span 51 to 71 (FLAH…PSNL), 84 to 104 (ELLW…TLAA), 128 to 148 (IFLW…EVLG), 155 to 175 (ILLK…TLLL), 188 to 208 (FIIA…LSYL), 234 to 254 (IALF…ALVL), 278 to 298 (LAFI…GSIC), 333 to 353 (VVYA…CTFA), 373 to 395 (LITR…PSGA), 398 to 418 (LIIL…IPLL), 437 to 457 (VVIA…FLVW), and 474 to 494 (GLIS…VVYL). A disordered region spans residues 516-545 (EAGGTPVVDASAADEDQPAPYRKDLADASM). The segment covering 536-545 (YRKDLADASM) has biased composition (basic and acidic residues).

Belongs to the NRAMP (TC 2.A.55) family. Expressed at low levels in roots.

Its subcellular location is the cell membrane. In terms of biological role, metal transporter that transports the trivalent cation aluminum (Al(3+)), but does not seem to transport divalent cations such as iron (Fe(2+)), manganese (Mg(2+)) or Cadmium (Cd(2+)). Involved in Al tolerance by taking up Al in root cells, where it is detoxified by chelation with organic acid anions and sequestration into the vacuoles. In Oryza sativa subsp. japonica (Rice), this protein is Metal transporter NRAT1 (NRAT1).